Reading from the N-terminus, the 304-residue chain is Ribonuclease Z (304 aa).

Residues histidine 63, histidine 65, aspartate 67, histidine 68, histidine 141, aspartate 208, and histidine 266 each contribute to the Zn(2+) site. Aspartate 67 serves as the catalytic Proton acceptor.

It belongs to the RNase Z family. As to quaternary structure, homodimer. It depends on Zn(2+) as a cofactor.

The enzyme catalyses Endonucleolytic cleavage of RNA, removing extra 3' nucleotides from tRNA precursor, generating 3' termini of tRNAs. A 3'-hydroxy group is left at the tRNA terminus and a 5'-phosphoryl group is left at the trailer molecule.. Zinc phosphodiesterase, which displays some tRNA 3'-processing endonuclease activity. Probably involved in tRNA maturation, by removing a 3'-trailer from precursor tRNA. This Chlamydia muridarum (strain MoPn / Nigg) protein is Ribonuclease Z.